A 174-amino-acid polypeptide reads, in one-letter code: Protein MOTHER of FT and TFL1 homolog 2 (174 aa).

This sequence belongs to the phosphatidylethanolamine-binding protein family.

Functionally, may form complexes with phosphorylated ligands by interfering with kinases and their effectors. The chain is Protein MOTHER of FT and TFL1 homolog 2 from Oryza sativa subsp. japonica (Rice).